Consider the following 506-residue polypeptide: Ribose import ATP-binding protein RbsA 1 (506 aa).

ABC transporter domains lie at 5–241 and 254–498; these read LALT…VGRR and RDAA…TSDA. Position 37-44 (37-44) interacts with ATP; the sequence is GENGAGKS.

The protein belongs to the ABC transporter superfamily. Ribose importer (TC 3.A.1.2.1) family. In terms of assembly, the complex is composed of an ATP-binding protein (RbsA), two transmembrane proteins (RbsC) and a solute-binding protein (RbsB).

It is found in the cell inner membrane. The enzyme catalyses D-ribose(out) + ATP + H2O = D-ribose(in) + ADP + phosphate + H(+). Its function is as follows. Part of the ABC transporter complex RbsABC involved in ribose import. Responsible for energy coupling to the transport system. The chain is Ribose import ATP-binding protein RbsA 1 from Burkholderia thailandensis (strain ATCC 700388 / DSM 13276 / CCUG 48851 / CIP 106301 / E264).